Here is a 434-residue protein sequence, read N- to C-terminus: D-amino acid dehydrogenase (434 aa).

FAD is bound at residue 3–17 (VIILGGGVIGVTSAW).

Belongs to the DadA oxidoreductase family. FAD is required as a cofactor.

The catalysed reaction is a D-alpha-amino acid + A + H2O = a 2-oxocarboxylate + AH2 + NH4(+). It participates in amino-acid degradation; D-alanine degradation; NH(3) and pyruvate from D-alanine: step 1/1. Oxidative deamination of D-amino acids. This is D-amino acid dehydrogenase from Proteus mirabilis (strain HI4320).